Here is a 205-residue protein sequence, read N- to C-terminus: Ribosomal RNA small subunit methyltransferase G (205 aa).

Residues glycine 66, phenylalanine 71, 119–120, and arginine 135 contribute to the S-adenosyl-L-methionine site; that span reads IE.

It belongs to the methyltransferase superfamily. RNA methyltransferase RsmG family.

It is found in the cytoplasm. It catalyses the reaction guanosine(527) in 16S rRNA + S-adenosyl-L-methionine = N(7)-methylguanosine(527) in 16S rRNA + S-adenosyl-L-homocysteine. In terms of biological role, specifically methylates the N7 position of guanine in position 527 of 16S rRNA. In Rhizobium johnstonii (strain DSM 114642 / LMG 32736 / 3841) (Rhizobium leguminosarum bv. viciae), this protein is Ribosomal RNA small subunit methyltransferase G.